An 890-amino-acid polypeptide reads, in one-letter code: Phosphotransferase RcsD (890 aa).

At 1–21 (MRQKETTATTRFSLLPGSITR) the chain is on the cytoplasmic side. A helical transmembrane segment spans residues 22 to 42 (FFLLLIIVLLVTMGVMVQSAV). At 43–308 (NAWLKDKSYQ…GTLLLDTLQN (266 aa)) the chain is on the periplasmic side. A helical transmembrane segment spans residues 309 to 329 (ILLPLLLNIGLLALALFGYTT). The Cytoplasmic portion of the chain corresponds to 330 to 890 (FRHFSSRSTE…DIDSYVKSLL (561 aa)). The segment at 468–678 (NIGDALKEPA…RYSVHIKMLA (211 aa)) is histidine-like kinase. The HPt domain maps to 803 to 890 (AQLHASGYYA…DIDSYVKSLL (88 aa)). At His842 the chain carries Phosphohistidine.

Belongs to the RcsD family. In terms of assembly, interacts with RcsC and RcsB. Has a higher affinity for RcsB than for RcsC. Post-translationally, phosphorylated by RcsC.

It is found in the cell inner membrane. In terms of biological role, component of the Rcs signaling system, which controls transcription of numerous genes. RcsD is a phosphotransfer intermediate between the sensor kinase RcsC and the response regulator RcsB. It acquires a phosphoryl group from RcsC and transfers it to RcsB. The system controls expression of genes involved in colanic acid capsule synthesis, biofilm formation and cell division. The polypeptide is Phosphotransferase RcsD (Escherichia coli (strain K12)).